Consider the following 251-residue polypeptide: MKKAGLLFLVMIVIAVVAAGIGYWKLTGEESDTLRKIVLEECLPNQQQNQNPSPCAEVKPNAGYVVLKDLNGPLQYLLMPTYRINGTESPLLTDPSTPNFFWLAWQARDFMSKKYGQPVPDRAVSLAINSRTGRTQNHFHIHISCIRPDVREQLDNNLANISSRWLPLPGGLRGHEYLARRVTESELVQRSPFMMLAEEVPEAREHMGSYGLAMVRQSDNSFVLLATQRNLLTLNRASAEEIQDHECEILR.

A helical transmembrane segment spans residues 4–24; the sequence is AGLLFLVMIVIAVVAAGIGYW.

This sequence belongs to the Cdh family.

The protein localises to the cell inner membrane. The enzyme catalyses a CDP-1,2-diacyl-sn-glycerol + H2O = a 1,2-diacyl-sn-glycero-3-phosphate + CMP + 2 H(+). The protein operates within phospholipid metabolism; CDP-diacylglycerol degradation; phosphatidate from CDP-diacylglycerol: step 1/1. The protein is CDP-diacylglycerol pyrophosphatase of Escherichia coli (strain SE11).